Reading from the N-terminus, the 542-residue chain is Chaperonin GroEL 2 (542 aa).

ATP-binding positions include 30 to 33 (TLGP), K51, 87 to 91 (DGTTT), G415, and D496.

This sequence belongs to the chaperonin (HSP60) family. In terms of assembly, forms a cylinder of 14 subunits composed of two heptameric rings stacked back-to-back. Interacts with the co-chaperonin GroES.

The protein localises to the cytoplasm. The catalysed reaction is ATP + H2O + a folded polypeptide = ADP + phosphate + an unfolded polypeptide.. In terms of biological role, together with its co-chaperonin GroES, plays an essential role in assisting protein folding. The GroEL-GroES system forms a nano-cage that allows encapsulation of the non-native substrate proteins and provides a physical environment optimized to promote and accelerate protein folding. The sequence is that of Chaperonin GroEL 2 from Rhizobium meliloti (strain 1021) (Ensifer meliloti).